The chain runs to 272 residues: Insulin-like growth factor-binding protein 5 (272 aa).

An N-terminal signal peptide occupies residues 1–20; that stretch reads MVLLTAVLLLLAAYAGPAQS. The IGFBP N-terminal domain occupies 23–103; sequence SFVHCEPCDE…LHGRGVCLNE (81 aa). 6 cysteine pairs are disulfide-bonded: Cys-27–Cys-53, Cys-30–Cys-55, Cys-38–Cys-56, Cys-45–Cys-59, Cys-67–Cys-80, and Cys-74–Cys-100. Residues 111–122 are compositionally biased toward basic and acidic residues; sequence KIERDSREHEEP. A disordered region spans residues 111-130; sequence KIERDSREHEEPTTSEMAEE. Ser-116 carries the phosphoserine; by FAM20C modification. An O-linked (HexNAc...) threonine glycan is attached at Thr-172. The Thyroglobulin type-1 domain maps to 189-263; sequence QGPCRRHMEA…MEYVDGDFQC (75 aa). Cystine bridges form between Cys-192–Cys-219, Cys-230–Cys-241, and Cys-243–Cys-263.

As to quaternary structure, interacts with IGF1; this interaction enhances the growth stimulatory effects of IGF1 on fibroblasts. Interacts with CAV1; this interaction allows trafficking of IGFBP5 from the plasma membrane to the nucleus. Interacts with NCL; this interaction is necessary for IGFBP5 localization to the nucleus. Cleaved by C1S in extracellular space. In terms of tissue distribution, osteosarcoma, and at lower levels in liver, kidney and brain.

Its subcellular location is the secreted. The protein localises to the cytoplasm. It is found in the nucleus. Multifunctional protein that plays a critical role in regulating the availability of IGFs to their receptors and thereby regulates IGF-mediated cellular processes including proliferation, differentiation, and apoptosis in a cell-type specific manner. Increases the cell proliferation of osteoblasts, intestinal smooth muscle cells and neuroblastoma cells. Enhances adhesion and survival of epithelial cells but decreases adhesion of mesenchymal cells. Once secreted, acts as a major mediator of mTORC1-dependent feedback inhibition of IGF1 signaling. Also plays a role in the induction of extracellular matrix (ECM) production and deposition independently of its nuclear translocation and binding to IGFs. Acts itself as a growth factor that can act independently of IGFs to regulate bone formation. Acts as a ligand for the ROR1 receptor which triggers formation of ROR1/HER2 heterodimer to enhance CREB oncogenic signaling. In Homo sapiens (Human), this protein is Insulin-like growth factor-binding protein 5 (IGFBP5).